Consider the following 237-residue polypeptide: Ribosomal RNA small subunit methyltransferase G (237 aa).

S-adenosyl-L-methionine-binding positions include Gly78, Phe83, 129 to 130, and Arg148; that span reads AE.

This sequence belongs to the methyltransferase superfamily. RNA methyltransferase RsmG family.

It localises to the cytoplasm. In terms of biological role, specifically methylates the N7 position of a guanine in 16S rRNA. This Streptococcus pyogenes serotype M12 (strain MGAS9429) protein is Ribosomal RNA small subunit methyltransferase G.